The primary structure comprises 316 residues: Ribosomal protein L11 methyltransferase (316 aa).

4 residues coordinate S-adenosyl-L-methionine: T162, G183, D205, and N248.

It belongs to the methyltransferase superfamily. PrmA family.

It is found in the cytoplasm. It carries out the reaction L-lysyl-[protein] + 3 S-adenosyl-L-methionine = N(6),N(6),N(6)-trimethyl-L-lysyl-[protein] + 3 S-adenosyl-L-homocysteine + 3 H(+). Methylates ribosomal protein L11. The protein is Ribosomal protein L11 methyltransferase of Levilactobacillus brevis (strain ATCC 367 / BCRC 12310 / CIP 105137 / JCM 1170 / LMG 11437 / NCIMB 947 / NCTC 947) (Lactobacillus brevis).